The primary structure comprises 293 residues: Plant cysteine oxidase 1 (293 aa).

Fe cation is bound by residues H148, H150, and H211. The segment at 250 to 293 is disordered; that stretch reads SEDDDVLSSEEEKEGYAWLQERDDNPEDHTNVVGALYRGPKVED. The segment covering 251–262 has biased composition (acidic residues); that stretch reads EDDDVLSSEEEK. Over residues 269–279 the composition is skewed to basic and acidic residues; the sequence is QERDDNPEDHT.

The protein belongs to the cysteine dioxygenase family. The cofactor is Fe(2+).

The protein resides in the nucleus. It localises to the cytoplasm. It catalyses the reaction L-cysteine + O2 = 3-sulfino-L-alanine + H(+). Functionally, catalyzes the oxidation of N-terminal cysteine residues (N-Cys), thus preparing the protein for N-end rule pathway-mediated proteasomal degradation, upstream of the N-end rule enzymes ATE1, ATE2 and PRT6. Controls the preparation of the group VII ethylene response factor (ERF-VII) proteins for degradation via the 26S proteasome N-end rule pathway. Acts as an oxygen sensor that controls the stability of ERF-VII proteins, which are stabilized in flooding-induced hypoxia, and regulate transcriptional adaptation to these adverse conditions. Not active on Cys located inside or at the C-terminus of a peptide. Acts redundantly with PCO2 to repress the anaerobic response. This is Plant cysteine oxidase 1 from Arabidopsis thaliana (Mouse-ear cress).